The following is a 535-amino-acid chain: Dimethylaniline monooxygenase [N-oxide-forming] 2 (535 aa).

N-acetylalanine is present on alanine 2. FAD-binding positions include 9–13, glutamate 32, 40–41, and 61–62; these read GAGVS, LW, and NT. NADP(+) contacts are provided by residues 60–61 and 195–198; these read TN and SASD. A Glycyl lysine isopeptide (Lys-Gly) (interchain with G-Cter in SUMO) cross-link involves residue lysine 492. Residues 510–530 traverse the membrane as a helical segment; that stretch reads FPVSFLLKFLGLFALVLAFLF.

It belongs to the FMO family. The cofactor is FAD. Requires Mg(2+) as cofactor. As to expression, lung.

The protein resides in the microsome membrane. Its subcellular location is the endoplasmic reticulum membrane. It carries out the reaction N,N-dimethylaniline + NADPH + O2 + H(+) = N,N-dimethylaniline N-oxide + NADP(+) + H2O. Catalyzes the oxidative metabolism of numerous xenobiotics, including mainly therapeutic drugs and insecticides that contain a soft nucleophile, most commonly nitrogen and sulfur and participates to their bioactivation. Most drug substrates are tertiary amines such as prochlorperazine and trifluoperazine which are N-oxygenated to form the N-oxide, or sulfides such as thiourea and ethionamide, which are S-oxygenated to the sulfoxide. Others include primary alkylamines such as N-dodecylamine and octan-1-amine that are sequentially monooxygenated to oximes through intermediate hydroxylamines and both steps are NADPH- and oxygen-dependent. Also metabolized N-Deacetyl ketoconazole (DAK) to N-hydroxy-DAK and appears to further metabolizes N-hydroxy-DAK to two others metabolites. Also catalyzes S-oxygenation of the thioether-containing organophosphate insecticides, phorate and disulfoton. This is Dimethylaniline monooxygenase [N-oxide-forming] 2 from Oryctolagus cuniculus (Rabbit).